A 176-amino-acid chain; its full sequence is ATP-dependent protease subunit HslV (176 aa).

The active site involves Thr2. The Na(+) site is built by Gly157, Cys160, and Thr163.

It belongs to the peptidase T1B family. HslV subfamily. As to quaternary structure, a double ring-shaped homohexamer of HslV is capped on each side by a ring-shaped HslU homohexamer. The assembly of the HslU/HslV complex is dependent on binding of ATP.

The protein resides in the cytoplasm. It catalyses the reaction ATP-dependent cleavage of peptide bonds with broad specificity.. With respect to regulation, allosterically activated by HslU binding. In terms of biological role, protease subunit of a proteasome-like degradation complex believed to be a general protein degrading machinery. The protein is ATP-dependent protease subunit HslV of Marinobacter nauticus (strain ATCC 700491 / DSM 11845 / VT8) (Marinobacter aquaeolei).